Consider the following 256-residue polypeptide: 1-(5-phosphoribosyl)-5-[(5-phosphoribosylamino)methylideneamino] imidazole-4-carboxamide isomerase (256 aa).

Asp8 serves as the catalytic Proton acceptor. The Proton donor role is filled by Asp130.

The protein belongs to the HisA/HisF family.

It is found in the cytoplasm. The catalysed reaction is 1-(5-phospho-beta-D-ribosyl)-5-[(5-phospho-beta-D-ribosylamino)methylideneamino]imidazole-4-carboxamide = 5-[(5-phospho-1-deoxy-D-ribulos-1-ylimino)methylamino]-1-(5-phospho-beta-D-ribosyl)imidazole-4-carboxamide. It functions in the pathway amino-acid biosynthesis; L-histidine biosynthesis; L-histidine from 5-phospho-alpha-D-ribose 1-diphosphate: step 4/9. This is 1-(5-phosphoribosyl)-5-[(5-phosphoribosylamino)methylideneamino] imidazole-4-carboxamide isomerase from Chlorobium luteolum (strain DSM 273 / BCRC 81028 / 2530) (Pelodictyon luteolum).